We begin with the raw amino-acid sequence, 189 residues long: dCTP deaminase (189 aa).

DCTP-binding positions include 112 to 117, 136 to 138, Q157, Y171, and Q181; these read KSTYAR and TLE. The active-site Proton donor/acceptor is the E138.

The protein belongs to the dCTP deaminase family. Homotrimer.

It catalyses the reaction dCTP + H2O + H(+) = dUTP + NH4(+). It functions in the pathway pyrimidine metabolism; dUMP biosynthesis; dUMP from dCTP (dUTP route): step 1/2. Its function is as follows. Catalyzes the deamination of dCTP to dUTP. This Burkholderia mallei (strain NCTC 10247) protein is dCTP deaminase.